The primary structure comprises 349 residues: Interleukin-10 receptor subunit beta (349 aa).

The signal sequence occupies residues 1-19 (MAPCVAGWLGGFLLVPALG). The Extracellular segment spans residues 20–220 (MIPPPEKVRM…RTGNDEITPS (201 aa)). Fibronectin type-III domains lie at 23–111 (PPEK…VEDT) and 112–215 (IIGP…TGND). Asn-49 is a glycosylation site (N-linked (GlcNAc...) asparagine). A disulfide bridge links Cys-66 with Cys-74. Residues Asn-102, Asn-161, and Asn-199 are each glycosylated (N-linked (GlcNAc...) asparagine). Cys-188 and Cys-209 are oxidised to a cystine. The helical transmembrane segment at 221–241 (WIVAIILIVSVLVVFLFLLGC) threads the bilayer. Over 242–349 (FVVLWLIYKK…PKLLTSTSEV (108 aa)) the chain is Cytoplasmic. Phosphoserine is present on Ser-299. The segment at 300–349 (EESEGSKQSPEDNCASEPPSDPGPRELESKDEAPSPPHDDPKLLTSTSEV) is disordered. The span at 322–341 (GPRELESKDEAPSPPHDDPK) shows a compositional bias: basic and acidic residues.

It belongs to the type II cytokine receptor family. As to quaternary structure, heterodimer with IFNLR1.

It localises to the membrane. Shared cell surface receptor required for the activation of five class 2 cytokines: IL10, IL22, IL26, IL28, and IFNL1. The IFNLR1/IL10RB dimer is a receptor for the cytokine ligands IFNL2 and IFNL3 and mediates their antiviral activity. The ligand/receptor complex stimulate the activation of the JAK/STAT signaling pathway leading to the expression of IFN-stimulated genes (ISG), which contribute to the antiviral state. The chain is Interleukin-10 receptor subunit beta (Il10rb) from Mus musculus (Mouse).